The primary structure comprises 148 residues: Cytochrome c6, chloroplastic (148 aa).

The N-terminal 58 residues, 1-58, are a transit peptide targeting the chloroplast; sequence MLQLANRSVRAKAARASQSARSVSCAAAKRGADVAPLTSALAVTASILLTTGAASASA. Heme c contacts are provided by Cys72, Cys75, His76, and Met118.

Belongs to the cytochrome c family. PetJ subfamily. In terms of assembly, thought to function as a monomer, however 2 crystal forms are observed; a homodimer and homotrimer, suggesting the protein oligomerizes. In terms of processing, binds 1 heme c group covalently per subunit.

The protein resides in the plastid. The protein localises to the chloroplast thylakoid lumen. Functions as an electron carrier between membrane-bound cytochrome b6-f and photosystem I in oxygenic photosynthesis. The chain is Cytochrome c6, chloroplastic (petJ) from Chlamydomonas reinhardtii (Chlamydomonas smithii).